The following is a 334-amino-acid chain: MLNTLIVGASGYTGAELALYLNRHPQMNITALMVSAQSVDAGKLISDLHPQLKGIIDVPVKPLTDAEEAAKGVDVVFLATDHKVSHDLAPVFLAAGCTVFDLSGAFRVQDAEFYRRYYGFEHQHPDWLAKAVYGLAEWRAESVKQAQLIAVPGCYPTAAQLALKPLLDAQLLNPAQWPVINAVSGVSGAGRKASMTNSFCEVSFQPYGIFNHRHEPEISTHLGTPVIFTPHLGNFARGILETITCRLQPGVTQQDVAEAYHNAYHDKPLVRLYDKGVPALKSVVGLPFCDIGFSVDGEHLIVVATEDNLLKGAAAQAVQCMNIRFGFPETQSLI.

Residue Cys154 is part of the active site.

This sequence belongs to the NAGSA dehydrogenase family. Type 1 subfamily.

The protein resides in the cytoplasm. It catalyses the reaction N-acetyl-L-glutamate 5-semialdehyde + phosphate + NADP(+) = N-acetyl-L-glutamyl 5-phosphate + NADPH + H(+). The protein operates within amino-acid biosynthesis; L-arginine biosynthesis; N(2)-acetyl-L-ornithine from L-glutamate: step 3/4. Its function is as follows. Catalyzes the NADPH-dependent reduction of N-acetyl-5-glutamyl phosphate to yield N-acetyl-L-glutamate 5-semialdehyde. The protein is N-acetyl-gamma-glutamyl-phosphate reductase of Pectobacterium carotovorum subsp. carotovorum (strain PC1).